A 353-amino-acid polypeptide reads, in one-letter code: Nif-specific regulatory protein (353 aa).

A Sigma-54 factor interaction domain is found at 12–240 (IVGESAALKE…LQNCTQRTAT (229 aa)). Residues 40–47 (GESGTGKE) and 103–112 (AHGGTLLLDE) contribute to the ATP site. The H-T-H motif DNA-binding region spans 325–344 (QAKAARLLGRTPRQVGYSLR).

In terms of assembly, interacts with sigma-54.

Its function is as follows. Required for activation of most nif operons, which are directly involved in nitrogen fixation. This is Nif-specific regulatory protein (nifA) from Rhizobium leguminosarum bv. trifolii.